Here is a 189-residue protein sequence, read N- to C-terminus: Interferon alpha-5 (189 aa).

The N-terminal stretch at 1–21 (MALPFVLLMALVVLNCKSICS) is a signal peptide. Cystine bridges form between Cys-24–Cys-122 and Cys-52–Cys-162.

Belongs to the alpha/beta interferon family.

Its subcellular location is the secreted. Its function is as follows. Produced by macrophages, IFN-alpha have antiviral activities. Interferon stimulates the production of two enzymes: a protein kinase and an oligoadenylate synthetase. The chain is Interferon alpha-5 (IFNA5) from Homo sapiens (Human).